We begin with the raw amino-acid sequence, 339 residues long: MLRVAINGFGRIGRSVLRALYESGKRDQIEIVAVNELSQPEGMAHLLQYDSTHGRFLHKVTHDQEYLYIDLPNGSQDRIRIVHQADISLLPWQSLQVDLVLDCTGVYGSKADGERHIDAGAKKVLFSHPGSADLDNTIIYGVNHDTLLPEHRVVSNGSCTTNCIIPVIKAIDDAFGIESGTITTIHSAMNDQPVIDAYHTDLRRTRAASQSIIPVDTKLHKGIERIFPKFSNKFEAISVRVPTVNVTAMDLSVTINTNVKVNDINQTIVNASQCTLHNIVDYTEAPLVSIDFNHDPHSAIVDGSQTRVSNGHLVKMLVWCDNEWGFANRMLDTALVMKK.

11 to 12 is a binding site for NAD(+); that stretch reads RI. Substrate-binding positions include 158–160, Arg-204, 217–218, and Arg-240; these read SCT and TK. The active-site Nucleophile is Cys-159. Asn-322 is a binding site for NAD(+).

This sequence belongs to the glyceraldehyde-3-phosphate dehydrogenase family. Epd subfamily. In terms of assembly, homotetramer.

Its subcellular location is the cytoplasm. It catalyses the reaction D-erythrose 4-phosphate + NAD(+) + H2O = 4-phospho-D-erythronate + NADH + 2 H(+). It participates in cofactor biosynthesis; pyridoxine 5'-phosphate biosynthesis; pyridoxine 5'-phosphate from D-erythrose 4-phosphate: step 1/5. Functionally, catalyzes the NAD-dependent conversion of D-erythrose 4-phosphate to 4-phosphoerythronate. The chain is D-erythrose-4-phosphate dehydrogenase from Aliivibrio salmonicida (strain LFI1238) (Vibrio salmonicida (strain LFI1238)).